A 750-amino-acid polypeptide reads, in one-letter code: GTP pyrophosphokinase rsh (750 aa).

In terms of domain architecture, HD spans 45–144 (YFSHPLEVAA…VKLADRLHNM (100 aa)). The TGS domain maps to 390-451 (DQVFCFTPKG…KNGDEVDIIR (62 aa)). Positions 587–613 (AAKVDPAATTPKPGKRALPIRGTNPDL) are disordered. The ACT domain occupies 676–750 (RISVSAINSP…SVSSAKRVNG (75 aa)).

The protein belongs to the RelA/SpoT family.

It catalyses the reaction GTP + ATP = guanosine 3'-diphosphate 5'-triphosphate + AMP. Functions as a (p)ppGpp synthase. In eubacteria ppGpp (guanosine 3'-diphosphate 5'-diphosphate) is a mediator of the stringent response that coordinates a variety of cellular activities in response to changes in nutritional abundance. Plays a role in adaptation of Brucella to its intracellular host environment. This chain is GTP pyrophosphokinase rsh (rsh), found in Brucella ovis (strain ATCC 25840 / 63/290 / NCTC 10512).